Consider the following 314-residue polypeptide: MPNLKAIRDRIQSVKNTKKITEAMRLVAAAKVRRAQEQVIATRPFADALANVLYNLLNRLQYGDVSLPLLQQRQVKTVALVVVSGDRGLCGGYNTYVIRRAEQRQKELEAQGINYRLITIGRKATQYFSRRQAPIEKTYVGLNQIPTADEAGSIADELLSLFLSETVDRVELIYTRFVSLISSRPVVQTLLPLTVQGLEVEDDEVFRLITRDGKLRVERETIAQEVSSFPQDMIFEQDPIQILDALLPLYINNQLLRGLQEAAASELAARMTAMSNASDNAGQLIGTLTLSYNKARQAAITQQLMEVVAGANAL.

Belongs to the ATPase gamma chain family. F-type ATPases have 2 components, CF(1) - the catalytic core - and CF(0) - the membrane proton channel. CF(1) has five subunits: alpha(3), beta(3), gamma(1), delta(1), epsilon(1). CF(0) has three main subunits: a, b and c.

The protein resides in the cellular thylakoid membrane. Its function is as follows. Produces ATP from ADP in the presence of a proton gradient across the membrane. The gamma chain is believed to be important in regulating ATPase activity and the flow of protons through the CF(0) complex. The protein is ATP synthase gamma chain of Rippkaea orientalis (strain PCC 8801 / RF-1) (Cyanothece sp. (strain PCC 8801)).